The following is a 304-amino-acid chain: Tegument protein VP22 (304 aa).

Disordered regions lie at residues 23–68 and 112–184; these read YSTV…PNDD and STSN…GTPK. Positions 43-58 are enriched in basic and acidic residues; that stretch reads RENDLYDKQSVSKEND. A compositionally biased stretch (pro residues) spans 123–142; the sequence is AQPPPRGAAAAPPPRVPTRP. Low complexity predominate over residues 143–154; that stretch reads PTRAAATSTTPR. Residues 160 to 163 carry the Nuclear localization signal motif; it reads PKQR. The short motif at 233-245 is the Nuclear export signal element; it reads LDRFLKAAAIRIL. A disordered region spans residues 262–304; sequence STPDGYAAAGPNGYDRRPRTASRRRSLKCKPPADDFFDDTNSG. Residues 280-289 are compositionally biased toward basic residues; it reads RTASRRRSLK.

The protein belongs to the alphaherpesvirinae VP22 tegument protein family. In terms of assembly, interacts with gE (via C-terminus); this interaction is necessary for the recruitment of VP22 to the Golgi and its packaging into virions. Interacts with gM (via C-terminus). Interacts with VP16; this interaction allows the formation of a tripartite complex composed of VP16, VP22 and UL41/VHS. Interacts with the capsid-binding protein UL16. Interacts with host CGAS. Post-translationally, highly phosphorylated in the host cell. Packaging is selective for underphosphorylated forms.

It is found in the virion tegument. The protein resides in the host cytoplasm. It localises to the host nucleus. The protein localises to the host Golgi apparatus. Tegument protein that plays different roles during the time course of infection. Participates in both the accumulation of viral mRNAs and viral protein translation at late time of infection. Modulates the RNase activity of the virion host shutoff protein UL41 probably to ensure necessary levels of key cellular mRNAs and proteins. Plays a role in microtubule reorganization that occurs after viral infection by stabilizing microtubule network. Plays a role in the inhibition of host innate immune system by targeting the CGAS enzymatic activity which is the principal cytosolic DNA sensor that detects invading viral DNA. Acts by mediating disruption of liquid-like droplets in which CGAS is activated, thereby preventing CGAS activity. In Equine herpesvirus 1 (strain Ab4p) (EHV-1), this protein is Tegument protein VP22.